The primary structure comprises 326 residues: Malate dehydrogenase (326 aa).

An NAD(+)-binding site is contributed by 12-18 (GAAGQIA). Substrate-binding residues include Arg-93 and Arg-99. NAD(+) contacts are provided by residues Asn-106, Gln-113, and 130-132 (VGN). 2 residues coordinate substrate: Asn-132 and Arg-163. The Proton acceptor role is filled by His-188.

The protein belongs to the LDH/MDH superfamily. MDH type 2 family.

It catalyses the reaction (S)-malate + NAD(+) = oxaloacetate + NADH + H(+). In terms of biological role, catalyzes the reversible oxidation of malate to oxaloacetate. The polypeptide is Malate dehydrogenase (Corynebacterium diphtheriae (strain ATCC 700971 / NCTC 13129 / Biotype gravis)).